The following is a 362-amino-acid chain: Phosphoserine aminotransferase (362 aa).

Residues Ser-9 and Arg-42 each contribute to the L-glutamate site. Pyridoxal 5'-phosphate is bound by residues Ala-76–Arg-77, Trp-102, Thr-153, Asp-174, and Gln-197. N6-(pyridoxal phosphate)lysine is present on Lys-198. Asn-239–Thr-240 lines the pyridoxal 5'-phosphate pocket.

Belongs to the class-V pyridoxal-phosphate-dependent aminotransferase family. SerC subfamily. As to quaternary structure, homodimer. The cofactor is pyridoxal 5'-phosphate.

It localises to the cytoplasm. The enzyme catalyses O-phospho-L-serine + 2-oxoglutarate = 3-phosphooxypyruvate + L-glutamate. The catalysed reaction is 4-(phosphooxy)-L-threonine + 2-oxoglutarate = (R)-3-hydroxy-2-oxo-4-phosphooxybutanoate + L-glutamate. The protein operates within amino-acid biosynthesis; L-serine biosynthesis; L-serine from 3-phospho-D-glycerate: step 2/3. It participates in cofactor biosynthesis; pyridoxine 5'-phosphate biosynthesis; pyridoxine 5'-phosphate from D-erythrose 4-phosphate: step 3/5. In terms of biological role, catalyzes the reversible conversion of 3-phosphohydroxypyruvate to phosphoserine and of 3-hydroxy-2-oxo-4-phosphonooxybutanoate to phosphohydroxythreonine. This is Phosphoserine aminotransferase from Photorhabdus laumondii subsp. laumondii (strain DSM 15139 / CIP 105565 / TT01) (Photorhabdus luminescens subsp. laumondii).